A 107-amino-acid chain; its full sequence is MVIVANKTLIRKGEGHKLVKRFDKIGKIEMQKGFLGLEVLVNAKEKEVDEVTISTRWETKADFHAWTKSEAFREAHSGRNARPDYILGNEIEFYDVEVVRMPIAQAQ.

Residues 2 to 93 (VIVANKTLIR…DYILGNEIEF (92 aa)) form the ABM domain. Asparagine 6 is a Fe cation binding site. Histidine 76 serves as a coordination point for heme.

This sequence belongs to the antibiotic biosynthesis monooxygenase family. Heme-degrading monooxygenase IsdG subfamily. As to quaternary structure, homodimer.

The protein localises to the cytoplasm. It carries out the reaction heme b + 3 reduced [NADPH--hemoprotein reductase] + 3 O2 = biliverdin IXalpha + CO + Fe(2+) + 3 oxidized [NADPH--hemoprotein reductase] + 3 H2O + H(+). Allows bacterial pathogens to use the host heme as an iron source. Catalyzes the oxidative degradation of the heme macrocyclic porphyrin ring to the biliverdin in the presence of a suitable electron donor such as ascorbate or NADPH--cytochrome P450 reductase, with subsequent release of free iron. The polypeptide is Heme-degrading monooxygenase (Shouchella clausii (strain KSM-K16) (Alkalihalobacillus clausii)).